Reading from the N-terminus, the 252-residue chain is Tumor necrosis factor ligand superfamily member 15 (252 aa).

Over 1–39 (MAEELGLGFGEGVPVEVLPEGCRHRPEARAGLAARSKAC) the chain is Cytoplasmic. A helical; Signal-anchor for type II membrane protein membrane pass occupies residues 40-60 (LALTCCLLSFPILAGLSTLLM). Topologically, residues 61 to 252 (AGQLRVPGKD…DKTFFGAFLL (192 aa)) are extracellular. A THD domain is found at 96–252 (PRAHLTIKKQ…DKTFFGAFLL (157 aa)). Asparagine 137 carries N-linked (GlcNAc...) asparagine glycosylation. The cysteines at positions 163 and 203 are disulfide-linked. A glycan (N-linked (GlcNAc...) asparagine) is linked at asparagine 230.

It belongs to the tumor necrosis factor family. In terms of assembly, homotrimer.

Its subcellular location is the membrane. Receptor for TNFRSF25 and TNFRSF6B. Mediates activation of NF-kappa-B. Inhibits vascular endothelial growth and angiogenesis (in vitro). Promotes activation of caspases and apoptosis. Promotes splenocyte alloactivation. In Mus musculus (Mouse), this protein is Tumor necrosis factor ligand superfamily member 15 (Tnfsf15).